We begin with the raw amino-acid sequence, 195 residues long: Imidazoleglycerol-phosphate dehydratase (195 aa).

This sequence belongs to the imidazoleglycerol-phosphate dehydratase family.

The protein resides in the cytoplasm. The catalysed reaction is D-erythro-1-(imidazol-4-yl)glycerol 3-phosphate = 3-(imidazol-4-yl)-2-oxopropyl phosphate + H2O. It functions in the pathway amino-acid biosynthesis; L-histidine biosynthesis; L-histidine from 5-phospho-alpha-D-ribose 1-diphosphate: step 6/9. In Pelotomaculum thermopropionicum (strain DSM 13744 / JCM 10971 / SI), this protein is Imidazoleglycerol-phosphate dehydratase.